We begin with the raw amino-acid sequence, 706 residues long: Elongation factor G (706 aa).

A tr-type G domain is found at 8–295; that stretch reads ELYRNFGIMA…AVIDYLPSPL (288 aa). Residues 17–24, 92–96, and 146–149 contribute to the GTP site; these read AHIDAGKT, DTPGH, and NKMD.

Belongs to the TRAFAC class translation factor GTPase superfamily. Classic translation factor GTPase family. EF-G/EF-2 subfamily.

Its subcellular location is the cytoplasm. In terms of biological role, catalyzes the GTP-dependent ribosomal translocation step during translation elongation. During this step, the ribosome changes from the pre-translocational (PRE) to the post-translocational (POST) state as the newly formed A-site-bound peptidyl-tRNA and P-site-bound deacylated tRNA move to the P and E sites, respectively. Catalyzes the coordinated movement of the two tRNA molecules, the mRNA and conformational changes in the ribosome. This chain is Elongation factor G, found in Ruegeria sp. (strain TM1040) (Silicibacter sp.).